The sequence spans 390 residues: Pyruvate dehydrogenase E1 component subunit alpha, somatic form, mitochondrial (390 aa).

The N-terminal 29 residues, 1-29 (MRKMLAAVSRVLAGAAQKPASRVLVASRN), are a transit peptide targeting the mitochondrion. The residue at position 63 (K63) is an N6-acetyllysine; alternate. N6-succinyllysine; alternate is present on K63. 11 residues coordinate pyruvate: H92, Y118, R119, A157, G165, V167, D196, G197, A198, N225, and Y227. Thiamine diphosphate-binding residues include Y118 and R119. Residues G165, V167, D196, G197, A198, and N225 each contribute to the thiamine diphosphate site. D196 serves as a coordination point for Mg(2+). 2 residues coordinate Mg(2+): N225 and Y227. A Phosphoserine; by PDK1 modification is found at S232. Position 244 is an N6-acetyllysine; alternate (K244). K244 is subject to N6-succinyllysine; alternate. Residue K267 is modified to N6-acetyllysine. K277 is modified (N6-succinyllysine). H292 serves as a coordination point for thiamine diphosphate. A Phosphoserine; by PDK1, PDK2, PDK3 and PDK4 modification is found at S293. Residue S295 is modified to Phosphoserine. S300 is modified (phosphoserine; by PDK1, PDK2, PDK3 and PDK4). Y301 bears the Phosphotyrosine mark. N6-acetyllysine; alternate is present on K313. K313 is subject to N6-succinyllysine; alternate. N6-acetyllysine occurs at positions 321 and 336. K385 is modified (N6-succinyllysine).

In terms of assembly, heterotetramer of two PDHA1 and two PDHB subunits. The heterotetramer interacts with DLAT, and is part of the multimeric pyruvate dehydrogenase complex that contains multiple copies of pyruvate dehydrogenase (E1), dihydrolipoamide acetyltransferase (DLAT, E2) and lipoamide dehydrogenase (DLD, E3). These subunits are bound to an inner core composed of about 48 DLAT and 12 PDHX molecules. It depends on thiamine diphosphate as a cofactor. Mg(2+) serves as cofactor. Post-translationally, phosphorylation at Ser-232, Ser-293 and Ser-300 by PDK family kinases inactivates the enzyme; for this phosphorylation at a single site is sufficient. Phosphorylation at Ser-293 interferes with access to active site, and thereby inactivates the enzyme. Dephosphorylation at all three sites, i.e. at Ser-232, Ser-293 and Ser-300, is required for reactivation. Acetylation alters the phosphorylation pattern. Deacetylated by SIRT3. As to expression, in all tissues, but in very low amount in testis.

Its subcellular location is the mitochondrion matrix. The enzyme catalyses N(6)-[(R)-lipoyl]-L-lysyl-[protein] + pyruvate + H(+) = N(6)-[(R)-S(8)-acetyldihydrolipoyl]-L-lysyl-[protein] + CO2. With respect to regulation, pyruvate dehydrogenase activity is inhibited by phosphorylation of PDHA1; it is reactivated by dephosphorylation. Its function is as follows. The pyruvate dehydrogenase complex catalyzes the overall conversion of pyruvate to acetyl-CoA and CO(2), and thereby links the glycolytic pathway to the tricarboxylic cycle. The sequence is that of Pyruvate dehydrogenase E1 component subunit alpha, somatic form, mitochondrial (Pdha1) from Rattus norvegicus (Rat).